The chain runs to 361 residues: uncharacterized protein (361 aa).

Position 41–48 (41–48) interacts with ATP; that stretch reads GPLNSGKT.

This sequence belongs to the archaeal ATPase family.

This is an uncharacterized protein from Methanocaldococcus jannaschii (strain ATCC 43067 / DSM 2661 / JAL-1 / JCM 10045 / NBRC 100440) (Methanococcus jannaschii).